A 433-amino-acid chain; its full sequence is Tol-Pal system protein TolB (433 aa).

The N-terminal stretch at methionine 1–alanine 26 is a signal peptide.

The protein belongs to the TolB family. In terms of assembly, the Tol-Pal system is composed of five core proteins: the inner membrane proteins TolA, TolQ and TolR, the periplasmic protein TolB and the outer membrane protein Pal. They form a network linking the inner and outer membranes and the peptidoglycan layer.

The protein localises to the periplasm. In terms of biological role, part of the Tol-Pal system, which plays a role in outer membrane invagination during cell division and is important for maintaining outer membrane integrity. The chain is Tol-Pal system protein TolB from Burkholderia pseudomallei (strain 1710b).